A 379-amino-acid polypeptide reads, in one-letter code: Chaperone protein DnaJ (379 aa).

In terms of domain architecture, J spans 5–70 (DYYEVLGVAK…QKRAAYDQYG (66 aa)). The segment at 139-217 (GYDTQIRVPS…CHGAGKVKET (79 aa)) adopts a CR-type zinc-finger fold. Cys152, Cys155, Cys169, Cys172, Cys191, Cys194, Cys205, and Cys208 together coordinate Zn(2+). 4 CXXCXGXG motif repeats span residues 152–159 (CEICHGSG), 169–176 (CPTCSGSG), 191–198 (CPKCHGTG), and 205–212 (CGHCHGAG).

It belongs to the DnaJ family. In terms of assembly, homodimer. The cofactor is Zn(2+).

The protein resides in the cytoplasm. In terms of biological role, participates actively in the response to hyperosmotic and heat shock by preventing the aggregation of stress-denatured proteins and by disaggregating proteins, also in an autonomous, DnaK-independent fashion. Unfolded proteins bind initially to DnaJ; upon interaction with the DnaJ-bound protein, DnaK hydrolyzes its bound ATP, resulting in the formation of a stable complex. GrpE releases ADP from DnaK; ATP binding to DnaK triggers the release of the substrate protein, thus completing the reaction cycle. Several rounds of ATP-dependent interactions between DnaJ, DnaK and GrpE are required for fully efficient folding. Also involved, together with DnaK and GrpE, in the DNA replication of plasmids through activation of initiation proteins. This Paraburkholderia phytofirmans (strain DSM 17436 / LMG 22146 / PsJN) (Burkholderia phytofirmans) protein is Chaperone protein DnaJ.